The following is a 375-amino-acid chain: Phospho-N-acetylmuramoyl-pentapeptide-transferase (375 aa).

A run of 10 helical transmembrane segments spans residues Ile-2–Phe-22, Ala-55–Leu-75, Pro-82–Val-102, Gly-120–Pro-140, Ile-158–Trp-178, Gly-198–Gln-218, Pro-237–Trp-257, Ile-264–Phe-284, Ile-289–Val-309, and Trp-345–Ile-365.

It belongs to the glycosyltransferase 4 family. MraY subfamily. It depends on Mg(2+) as a cofactor.

Its subcellular location is the cell membrane. It catalyses the reaction UDP-N-acetyl-alpha-D-muramoyl-L-alanyl-gamma-D-glutamyl-meso-2,6-diaminopimeloyl-D-alanyl-D-alanine + di-trans,octa-cis-undecaprenyl phosphate = di-trans,octa-cis-undecaprenyl diphospho-N-acetyl-alpha-D-muramoyl-L-alanyl-D-glutamyl-meso-2,6-diaminopimeloyl-D-alanyl-D-alanine + UMP. The protein operates within cell wall biogenesis; peptidoglycan biosynthesis. Its function is as follows. Catalyzes the initial step of the lipid cycle reactions in the biosynthesis of the cell wall peptidoglycan: transfers peptidoglycan precursor phospho-MurNAc-pentapeptide from UDP-MurNAc-pentapeptide onto the lipid carrier undecaprenyl phosphate, yielding undecaprenyl-pyrophosphoryl-MurNAc-pentapeptide, known as lipid I. This chain is Phospho-N-acetylmuramoyl-pentapeptide-transferase, found in Micrococcus luteus (strain ATCC 4698 / DSM 20030 / JCM 1464 / CCM 169 / CCUG 5858 / IAM 1056 / NBRC 3333 / NCIMB 9278 / NCTC 2665 / VKM Ac-2230) (Micrococcus lysodeikticus).